A 314-amino-acid chain; its full sequence is Olfactory receptor 5P76 (314 aa).

The Extracellular segment spans residues 1–28 (MAFLEDGNHTAVTGFILLGLTDDPVLRV). A glycan (N-linked (GlcNAc...) asparagine) is linked at Asn8. The helical transmembrane segment at 29-49 (VLFVIILCIYLVTVSGNLSTI) threads the bilayer. Residues 50 to 57 (LLIRVSSQ) lie on the Cytoplasmic side of the membrane. A helical transmembrane segment spans residues 58–78 (LHHPMYFFLSHLASADIGYSS). The Extracellular segment spans residues 79–102 (SVTPNMLVNFLVERNTISYLGCGI). Cys100 and Cys192 are oxidised to a cystine. A helical membrane pass occupies residues 103–123 (QLGSAVFFGTVECFLLAAMAY). Topologically, residues 124–136 (DRFIAICSPLLYS) are cytoplasmic. Residues 137–157 (NKMSTQVCVQLLVGSYIGGFL) traverse the membrane as a helical segment. The Extracellular segment spans residues 158–199 (NASSFTLSFFSLVFCGPNRVNHFFCDFAPLVKLSCSDVSVPA). A helical transmembrane segment spans residues 200–220 (VVPSFTAGSIIIVTIFVIAVS). The Cytoplasmic segment spans residues 221-240 (YIYILITILKMRSTEGRQKA). A helical membrane pass occupies residues 241-261 (FSTCTSHLTAVTLFYGTITFI). Residues 262 to 274 (YVMPKSSYSTDQN) lie on the Extracellular side of the membrane. Residues 275-295 (KVVSVFYMVVVPMLNPLIYSL) form a helical membrane-spanning segment. The Cytoplasmic portion of the chain corresponds to 296–314 (RNKEIKGALKRQLAKNTFS).

Belongs to the G-protein coupled receptor 1 family.

The protein resides in the cell membrane. Its function is as follows. Potential odorant receptor. The sequence is that of Olfactory receptor 5P76 from Mus musculus (Mouse).